We begin with the raw amino-acid sequence, 430 residues long: Leucoanthocyanidin dioxygenase (430 aa).

Residues 212–311 (LLLQMKINYY…RFSWAIFCEP (100 aa)) enclose the Fe2OG dioxygenase domain. Fe cation-binding residues include His236, Asp238, and His292. Basic and acidic residues-rich tracts occupy residues 376-407 (KKDNQDAVAENKDIKEDEQCGPAEHKDIKEDG) and 415-430 (KVFKENNQDVAAEESK). The disordered stretch occupies residues 376-430 (KKDNQDAVAENKDIKEDEQCGPAEHKDIKEDGQGAAAENKVFKENNQDVAAEESK).

This sequence belongs to the iron/ascorbate-dependent oxidoreductase family. Requires Fe cation as cofactor. It depends on L-ascorbate as a cofactor. In terms of tissue distribution, predominantly expressed in corollas and at lower levels in anthers.

It catalyses the reaction a (2R,3S,4S)-leucoanthocyanidin + 2-oxoglutarate + O2 = a 4-H-anthocyanidin with a 3-hydroxy group + succinate + CO2 + 2 H2O. It functions in the pathway pigment biosynthesis; anthocyanin biosynthesis. Oxidation of leucoanthocyanidins into anthocyanidins. The polypeptide is Leucoanthocyanidin dioxygenase (ANT17) (Petunia hybrida (Petunia)).